Here is a 344-residue protein sequence, read N- to C-terminus: Selenide, water dikinase (344 aa).

Cysteine 16 is a catalytic residue. Residues lysine 19 and 47–49 (SRD) each bind ATP. Aspartate 50 contacts Mg(2+). ATP-binding positions include aspartate 67, aspartate 90, and 138 to 140 (GHS). Aspartate 90 lines the Mg(2+) pocket. Aspartate 226 serves as a coordination point for Mg(2+).

This sequence belongs to the selenophosphate synthase 1 family. Class I subfamily. As to quaternary structure, homodimer. Mg(2+) is required as a cofactor.

The enzyme catalyses hydrogenselenide + ATP + H2O = selenophosphate + AMP + phosphate + 2 H(+). In terms of biological role, synthesizes selenophosphate from selenide and ATP. This chain is Selenide, water dikinase, found in Pseudomonas aeruginosa (strain ATCC 15692 / DSM 22644 / CIP 104116 / JCM 14847 / LMG 12228 / 1C / PRS 101 / PAO1).